Consider the following 126-residue polypeptide: Fluoride-specific ion channel FluC 2 (126 aa).

The next 4 helical transmembrane spans lie at 11–31 (IFLI…LCEL), 34–54 (GQLG…MIMY), 66–86 (GKIA…TFAV), and 93–113 (FIPA…GVFF). Na(+) contacts are provided by G76 and T79.

It belongs to the fluoride channel Fluc/FEX (TC 1.A.43) family.

The protein resides in the cell membrane. The catalysed reaction is fluoride(in) = fluoride(out). With respect to regulation, na(+) is not transported, but it plays an essential structural role and its presence is essential for fluoride channel function. Fluoride-specific ion channel. Important for reducing fluoride concentration in the cell, thus reducing its toxicity. This Methanosarcina acetivorans (strain ATCC 35395 / DSM 2834 / JCM 12185 / C2A) protein is Fluoride-specific ion channel FluC 2.